Reading from the N-terminus, the 520-residue chain is Maturase K (520 aa).

It belongs to the intron maturase 2 family. MatK subfamily.

Its subcellular location is the plastid. The protein resides in the chloroplast. In terms of biological role, usually encoded in the trnK tRNA gene intron. Probably assists in splicing its own and other chloroplast group II introns. This chain is Maturase K, found in Beaucarnea recurvata (Elephant-foot tree).